A 795-amino-acid polypeptide reads, in one-letter code: Phenylalanine--tRNA ligase beta subunit (795 aa).

Residues 39–148 (AGEFTGVKVG…EGTTLGADVR (110 aa)) form the tRNA-binding domain. The 76-residue stretch at 401-476 (PKANTVELRR…RIYGYNNIPN (76 aa)) folds into the B5 domain. Mg(2+) contacts are provided by aspartate 454, aspartate 460, glutamate 463, and glutamate 464. The 94-residue stretch at 701 to 794 (SKFPANRRDI…IGEKFSATLR (94 aa)) folds into the FDX-ACB domain.

Belongs to the phenylalanyl-tRNA synthetase beta subunit family. Type 1 subfamily. In terms of assembly, tetramer of two alpha and two beta subunits. Mg(2+) serves as cofactor.

It localises to the cytoplasm. It catalyses the reaction tRNA(Phe) + L-phenylalanine + ATP = L-phenylalanyl-tRNA(Phe) + AMP + diphosphate + H(+). The polypeptide is Phenylalanine--tRNA ligase beta subunit (Aliivibrio fischeri (strain ATCC 700601 / ES114) (Vibrio fischeri)).